The chain runs to 153 residues: UPF0260 protein YcgN (153 aa).

It belongs to the UPF0260 family.

The polypeptide is UPF0260 protein YcgN (Salmonella agona (strain SL483)).